Reading from the N-terminus, the 231-residue chain is tRNA (guanine-N(7)-)-methyltransferase (231 aa).

S-adenosyl-L-methionine contacts are provided by glutamate 62, glutamate 87, aspartate 114, and aspartate 137. Aspartate 137 is an active-site residue. Residues lysine 141, aspartate 173, and 210–213 each bind substrate; that span reads TKFE.

This sequence belongs to the class I-like SAM-binding methyltransferase superfamily. TrmB family.

The enzyme catalyses guanosine(46) in tRNA + S-adenosyl-L-methionine = N(7)-methylguanosine(46) in tRNA + S-adenosyl-L-homocysteine. Its pathway is tRNA modification; N(7)-methylguanine-tRNA biosynthesis. Catalyzes the formation of N(7)-methylguanine at position 46 (m7G46) in tRNA. The protein is tRNA (guanine-N(7)-)-methyltransferase of Methylococcus capsulatus (strain ATCC 33009 / NCIMB 11132 / Bath).